We begin with the raw amino-acid sequence, 882 residues long: Translation initiation factor IF-2 (882 aa).

Positions 28-296 (GIRKSADDSV…LQQGFQKPAQ (269 aa)) are disordered. Residues 67–81 (STLNIPGTGGKSKSV) are compositionally biased toward polar residues. The span at 92-209 (VKRDPQEAER…RMAEENKWTD (118 aa)) shows a compositional bias: basic and acidic residues. Residues 244-258 (GRGRNAKAARPKKGN) are compositionally biased toward basic residues. Residues 259 to 272 (KHAESKADREEARA) are compositionally biased toward basic and acidic residues. In terms of domain architecture, tr-type G spans 381–550 (PRAPVVTIMG…LLQAEVLELK (170 aa)). The interval 390 to 397 (GHVDHGKT) is G1. A GTP-binding site is contributed by 390–397 (GHVDHGKT). Positions 415–419 (GITQH) are G2. The segment at 436 to 439 (DTPG) is G3. Residues 436–440 (DTPGH) and 490–493 (NKID) each bind GTP. The segment at 490-493 (NKID) is G4. Positions 526-528 (SAK) are G5. Lys800 carries the post-translational modification N6-acetyllysine.

The protein belongs to the TRAFAC class translation factor GTPase superfamily. Classic translation factor GTPase family. IF-2 subfamily.

The protein resides in the cytoplasm. Its function is as follows. One of the essential components for the initiation of protein synthesis. Protects formylmethionyl-tRNA from spontaneous hydrolysis and promotes its binding to the 30S ribosomal subunits. Also involved in the hydrolysis of GTP during the formation of the 70S ribosomal complex. This chain is Translation initiation factor IF-2, found in Shigella boydii serotype 4 (strain Sb227).